Consider the following 236-residue polypeptide: MAPDPWFSTYDSTCQIAQEIAEKIQQRNQYERKGEKAPKLTVTIRALLQNLKEKIALLKDLLLRAVSTHQITQLEGDRRQNLLDDLVTRERLLLASFKNEGAEPDLIRSSLMSEEAKRGAPNPWLFEEPEETRGLGFDEIRQQQQKIIQEQDAGLDALSSIISRQKQMGQEIGNELDEQNEIIDDLANLVENTDEKLRNETRRVNMVDRKSASCGMIMVILLLLVAIVVVAVWPTN.

The Cytoplasmic portion of the chain corresponds to 1-215; the sequence is MAPDPWFSTY…MVDRKSASCG (215 aa). Residues 42-65 are a coiled coil; the sequence is VTIRALLQNLKEKIALLKDLLLRA. The t-SNARE coiled-coil homology domain occupies 145-207; that stretch reads QKIIQEQDAG…RNETRRVNMV (63 aa). Ser160 carries the phosphoserine modification. A helical; Anchor for type IV membrane protein membrane pass occupies residues 216-232; the sequence is MIMVILLLLVAIVVVAV. At 233–236 the chain is on the vesicular side; it reads WPTN.

It belongs to the syntaxin family. In terms of assembly, forms a SNARE complex with STX7, VTI1B and VAMP8 which functions in the homotypic fusion of late endosomes. Part of the SNARE core complex containing STX7, VAMP8 and VTI1B. Interacts with VAMP8. Interacts with HECTD3. Interacts with TPC1. In terms of processing, ubiquitinated by HECTD3. As to expression, highly expressed in heart. Also found in brain, kidney, liver, lung, placenta, skeletal muscle, spleen and pancreas.

It localises to the membrane. Vesicle trafficking protein that functions in the early secretory pathway, possibly by mediating retrograde transport from cis-Golgi membranes to the ER. The sequence is that of Syntaxin-8 (STX8) from Homo sapiens (Human).